Reading from the N-terminus, the 97-residue chain is Large ribosomal subunit protein bL28 (97 aa).

It belongs to the bacterial ribosomal protein bL28 family.

In Nitrobacter winogradskyi (strain ATCC 25391 / DSM 10237 / CIP 104748 / NCIMB 11846 / Nb-255), this protein is Large ribosomal subunit protein bL28.